A 553-amino-acid polypeptide reads, in one-letter code: Solute carrier family 22 member 4 (553 aa).

Topologically, residues 1-20 (MRDYDEVIAFLGEWGPFQRL) are cytoplasmic. The chain crosses the membrane as a helical span at residues 21–41 (IFFLLSASIIPNGFNGMSVVF). Over 42-142 (LAGTPEHRCL…NLVCEDDWKT (101 aa)) the chain is Extracellular. Asn-57, Asn-64, and Asn-91 each carry an N-linked (GlcNAc...) asparagine glycan. A helical transmembrane segment spans residues 143 to 163 (PLTTSLFFVGVLCGSFVSGQL). Residues 164–171 (SDRFGRKK) lie on the Cytoplasmic side of the membrane. The chain crosses the membrane as a helical span at residues 172–192 (VLFATMAVQTGFSFVQIFSTN). The Extracellular segment spans residues 193 to 197 (WEMFT). A helical transmembrane segment spans residues 198–218 (VLFAIVGMGQISNYVVAFILG). 218–225 (GTEILSKS) contacts ATP. Residues 219–232 (TEILSKSVRIIFST) lie on the Cytoplasmic side of the membrane. Residues 233-253 (LGVCTFFAIGYMVLPLFAYFI) traverse the membrane as a helical segment. The Extracellular segment spans residues 254-257 (RDWR). The chain crosses the membrane as a helical span at residues 258-278 (MLLLALTLPGLFCVPLWWFIP). At 279–339 (ESPRWLISQR…IILDLFRTRN (61 aa)) the chain is on the cytoplasmic side. The helical transmembrane segment at 340 to 360 (IATITVMAVMLWMLTSVGYFA) threads the bilayer. Over 361 to 373 (LSLNVPNLHGDVY) the chain is Extracellular. The chain crosses the membrane as a helical span at residues 374 to 394 (LNCFLSGLIEVPAYFTAWLLL). Over 395-400 (RTLPRR) the chain is Cytoplasmic. A helical membrane pass occupies residues 401-421 (YIIAGVLFWGGGVLLLIQVVP). The Extracellular portion of the chain corresponds to 422 to 428 (EDYNFVS). A helical membrane pass occupies residues 429-449 (IGLVMLGKFGITSAFSMLYVF). The Cytoplasmic portion of the chain corresponds to 450 to 462 (TAELYPTLVRNMA). The chain crosses the membrane as a helical span at residues 463 to 483 (VGITSMASRVGSIIAPYFVYL). The Extracellular portion of the chain corresponds to 484–488 (GAYNR). Residues 489 to 509 (LLPYILMGSLTVLIGIITLFF) traverse the membrane as a helical segment. At 510 to 553 (PESFGVTLPENLEQMQKVRGFRCGKKSTVSVDREESPKVLITAF) the chain is on the cytoplasmic side.

The protein belongs to the major facilitator (TC 2.A.1) superfamily. Organic cation transporter (TC 2.A.1.19) family. In terms of assembly, interacts with PDZK1. Expressed in kidney. Expressed in small intestines. Expressed in liver in non-parenchymal liver tissue such as sinusoidal vessels. Weakly expressed in lung and brain. Expressed in testis and spleen. Expressed in heart.

It is found in the apical cell membrane. The protein resides in the mitochondrion membrane. It localises to the basal cell membrane. It carries out the reaction ergothioneine(out) + Na(+)(out) = ergothioneine(in) + Na(+)(in). It catalyses the reaction acetylcholine(in) = acetylcholine(out). The catalysed reaction is (R)-carnitine(out) + Na(+)(out) = (R)-carnitine(in) + Na(+)(in). The enzyme catalyses glycine betaine(out) + Na(+)(out) = glycine betaine(in) + Na(+)(in). Its activity is regulated as follows. Allosterically activated by intracellular ATP. Transporter that mediates the transport of endogenous and microbial zwitterions and organic cations. Functions as a Na(+)-dependent and pH-dependent high affinity microbial symporter of potent food-derived antioxidant ergothioeine. Transports one sodium ion with one ergothioeine molecule. Involved in the absorption of ergothioneine from the luminal/apical side of the small intestine and renal tubular cells, and into non-parenchymal liver cells, thereby contributing to maintain steady-state ergothioneine level in the body. Also mediates the bidirectional transport of acetycholine, although the exact transport mechanism has not been fully identified yet. Most likely exports anti-inflammatory acetylcholine in non-neuronal tissues, thereby contributing to the non-neuronal cholinergic system. Displays a general physiological role linked to better survival by controlling inflammation and oxidative stress, which may be related to ergothioneine and acetycholine transports. May also function as a low-affinity Na(+)-dependent transporter of L-carnitine through the mitochondrial membrane, thereby maintaining intracellular carnitine homeostasis. May contribute to regulate the transport of cationic compounds in testis across the blood-testis-barrier. The sequence is that of Solute carrier family 22 member 4 from Mus musculus (Mouse).